The sequence spans 350 residues: tRNA uridine(34) hydroxylase (350 aa).

A Rhodanese domain is found at 146-240 (DDPDALFIDM…YARKARDQGL (95 aa)). Residue Cys200 is the Cysteine persulfide intermediate of the active site.

It belongs to the TrhO family.

The catalysed reaction is uridine(34) in tRNA + AH2 + O2 = 5-hydroxyuridine(34) in tRNA + A + H2O. Catalyzes oxygen-dependent 5-hydroxyuridine (ho5U) modification at position 34 in tRNAs, the first step in 5-carboxymethoxyuridine (cmo5U) biosynthesis. May be part of an alternate pathway, which is able to bypass cmo5U biogenesis in a subset of tRNAs under aerobic conditions. The protein is tRNA uridine(34) hydroxylase of Escherichia coli O6:K15:H31 (strain 536 / UPEC).